The sequence spans 651 residues: DNA ligase (651 aa).

NAD(+)-binding positions include 30 to 34 (DEEYD), 79 to 80 (SM), and Glu-105. Residue Lys-107 is the N6-AMP-lysine intermediate of the active site. Residues Arg-128, Glu-162, and Lys-301 each coordinate NAD(+). 4 residues coordinate Zn(2+): Cys-395, Cys-398, Cys-411, and Cys-416. In terms of domain architecture, BRCT spans 570–651 (ALNENISNKT…NALLGGDDEV (82 aa)).

The protein belongs to the NAD-dependent DNA ligase family. LigA subfamily. Mg(2+) is required as a cofactor. Mn(2+) serves as cofactor.

It carries out the reaction NAD(+) + (deoxyribonucleotide)n-3'-hydroxyl + 5'-phospho-(deoxyribonucleotide)m = (deoxyribonucleotide)n+m + AMP + beta-nicotinamide D-nucleotide.. DNA ligase that catalyzes the formation of phosphodiester linkages between 5'-phosphoryl and 3'-hydroxyl groups in double-stranded DNA using NAD as a coenzyme and as the energy source for the reaction. It is essential for DNA replication and repair of damaged DNA. The polypeptide is DNA ligase (Campylobacter lari (strain RM2100 / D67 / ATCC BAA-1060)).